The chain runs to 412 residues: Transforming growth factor beta-2 proprotein (412 aa).

The N-terminal stretch at 1-20 (MHCYLLSVFLTLDLAAVALS) is a signal peptide. Residues Asn-72, Asn-139, and Asn-240 are each glycosylated (N-linked (GlcNAc...) asparagine). 4 cysteine pairs are disulfide-bonded: Cys-307-Cys-316, Cys-315-Cys-378, Cys-344-Cys-409, and Cys-348-Cys-411.

This sequence belongs to the TGF-beta family. In terms of assembly, interacts with Transforming growth factor beta-2 (TGF-beta-2) chain; interaction is non-covalent and maintains (TGF-beta-2) in a latent state. Homodimer; disulfide-linked. Interacts with TGF-beta receptors (TGFBR1 and TGFBR2), leading to signal transduction. Post-translationally, the precursor proprotein is cleaved in the Golgi apparatus to form Transforming growth factor beta-2 (TGF-beta-2) and Latency-associated peptide (LAP) chains, which remain non-covalently linked, rendering TGF-beta-2 inactive.

The protein resides in the secreted. It localises to the extracellular space. Its subcellular location is the extracellular matrix. Precursor of the Latency-associated peptide (LAP) and Transforming growth factor beta-2 (TGF-beta-2) chains, which constitute the regulatory and active subunit of TGF-beta-2, respectively. Functionally, required to maintain the Transforming growth factor beta-2 (TGF-beta-2) chain in a latent state during storage in extracellular matrix. Associates non-covalently with TGF-beta-2 and regulates its activation via interaction with 'milieu molecules', such as LTBP1 and LRRC32/GARP, that control activation of TGF-beta-2. Its function is as follows. Multifunctional protein that regulates various processes such as angiogenesis and heart development. Activation into mature form follows different steps: following cleavage of the proprotein in the Golgi apparatus, Latency-associated peptide (LAP) and Transforming growth factor beta-2 (TGF-beta-2) chains remain non-covalently linked rendering TGF-beta-2 inactive during storage in extracellular matrix. At the same time, LAP chain interacts with 'milieu molecules', such as LTBP1 and LRRC32/GARP, that control activation of TGF-beta-2 and maintain it in a latent state during storage in extracellular milieus. Once activated following release of LAP, TGF-beta-2 acts by binding to TGF-beta receptors (TGFBR1 and TGFBR2), which transduce signal. The polypeptide is Transforming growth factor beta-2 proprotein (TGFB2) (Gallus gallus (Chicken)).